A 41-amino-acid chain; its full sequence is Competence-stimulating peptide type 1 (41 aa).

Residues 1-24 (MKNTVKLEQFVALKEKDLQKIKGG) constitute a propeptide that is removed on maturation.

This sequence belongs to the ComC family.

Its subcellular location is the secreted. Its function is as follows. Acts as a pheromone, induces cells to develop competence for genetic transformation. The chain is Competence-stimulating peptide type 1 (comC1) from Streptococcus pneumoniae.